The sequence spans 238 residues: SPEG neighbor protein (238 aa).

The IQ domain occupies 29-55 (QSAAIRIQASYRGHRSRKELREKGPPR). Ig-like domains follow at residues 54 to 143 (PRVL…ARIL) and 147 to 236 (PTKI…ARVD).

This is SPEG neighbor protein from Homo sapiens (Human).